The primary structure comprises 158 residues: Transcription elongation factor GreA (158 aa).

This sequence belongs to the GreA/GreB family.

Its function is as follows. Necessary for efficient RNA polymerase transcription elongation past template-encoded arresting sites. The arresting sites in DNA have the property of trapping a certain fraction of elongating RNA polymerases that pass through, resulting in locked ternary complexes. Cleavage of the nascent transcript by cleavage factors such as GreA or GreB allows the resumption of elongation from the new 3'terminus. GreA releases sequences of 2 to 3 nucleotides. In Rhizobium leguminosarum bv. trifolii (strain WSM2304), this protein is Transcription elongation factor GreA.